The chain runs to 507 residues: Alkyl hydroperoxide reductase subunit F (507 aa).

207-222 (DVLIVGGGPASGSAAI) serves as a coordination point for FAD. The cysteines at positions 335 and 338 are disulfide-linked. An NAD(+)-binding site is contributed by 347 to 361 (DVAVIGGGNSGVEAA). 467 to 477 (TNVPGIFAAGD) contacts FAD.

It belongs to the class-II pyridine nucleotide-disulfide oxidoreductase family. As to quaternary structure, homodimer. The cofactor is FAD.

Functionally, serves to protect the cell against DNA damage by alkyl hydroperoxides. It can use either NADH or NADPH as electron donor for direct reduction of redox dyes or of alkyl hydroperoxides when combined with the AhpC protein. This chain is Alkyl hydroperoxide reductase subunit F (ahpF), found in Staphylococcus aureus (strain MRSA252).